The chain runs to 280 residues: Polyamine aminopropyltransferase 2 (280 aa).

The PABS domain occupies 2–237 (ELWLDEALEL…GIIGFTYCSK (236 aa)). Glutamine 33 contributes to the S-methyl-5'-thioadenosine binding site. Spermidine-binding residues include histidine 64 and aspartate 88. Residues glutamate 108 and 139 to 140 (DG) each bind S-methyl-5'-thioadenosine. Residue aspartate 157 is the Proton acceptor of the active site. 157–160 (DSSD) contributes to the spermidine binding site. Proline 164 serves as a coordination point for S-methyl-5'-thioadenosine.

The protein belongs to the spermidine/spermine synthase family. Homodimer or homotetramer.

The protein resides in the cytoplasm. The catalysed reaction is S-adenosyl 3-(methylsulfanyl)propylamine + putrescine = S-methyl-5'-thioadenosine + spermidine + H(+). Its pathway is amine and polyamine biosynthesis; spermidine biosynthesis; spermidine from putrescine: step 1/1. In terms of biological role, catalyzes the irreversible transfer of a propylamine group from the amino donor S-adenosylmethioninamine (decarboxy-AdoMet) to putrescine (1,4-diaminobutane) to yield spermidine. The sequence is that of Polyamine aminopropyltransferase 2 from Leptospira interrogans serogroup Icterohaemorrhagiae serovar Lai (strain 56601).